We begin with the raw amino-acid sequence, 168 residues long: PTS system glucose-specific EIIA component (168 aa).

Residues 38-142 (DEVFSNKIVG…STLTPVIISN (105 aa)) form the PTS EIIA type-1 domain. Zn(2+)-binding residues include H75 and H90. H90 serves as the catalytic Tele-phosphohistidine intermediate; for EIIA activity. Phosphohistidine; by HPr is present on H90.

The cofactor is Zn(2+).

The protein resides in the cytoplasm. In terms of biological role, the phosphoenolpyruvate-dependent sugar phosphotransferase system (sugar PTS), a major carbohydrate active transport system, catalyzes the phosphorylation of incoming sugar substrates concomitantly with their translocation across the cell membrane. The enzyme II complex composed of PtsG and Crr is involved in glucose transport. This is PTS system glucose-specific EIIA component (crr) from Buchnera aphidicola subsp. Baizongia pistaciae (strain Bp).